We begin with the raw amino-acid sequence, 276 residues long: NAD kinase (276 aa).

Asp67 serves as the catalytic Proton acceptor. NAD(+) is bound by residues 67 to 68 (DG), Arg72, 136 to 137 (ND), Lys147, Arg164, Asp166, 177 to 182 (TAYALS), Ala201, and Gln235.

Belongs to the NAD kinase family. The cofactor is a divalent metal cation.

It is found in the cytoplasm. It catalyses the reaction NAD(+) + ATP = ADP + NADP(+) + H(+). Its function is as follows. Involved in the regulation of the intracellular balance of NAD and NADP, and is a key enzyme in the biosynthesis of NADP. Catalyzes specifically the phosphorylation on 2'-hydroxyl of the adenosine moiety of NAD to yield NADP. This chain is NAD kinase, found in Thermococcus sibiricus (strain DSM 12597 / MM 739).